The sequence spans 263 residues: Chymotrypsinogen B (263 aa).

Positions 1 to 18 are cleaved as a signal peptide; the sequence is MAFLWLVSCFALVGATFG. 5 disulfides stabilise this stretch: C19/C140, C60/C76, C154/C219, C186/C200, and C209/C238. Positions 34–261 constitute a Peptidase S1 domain; sequence IVNGEDAIPG…LMPWVQQILE (228 aa). The active-site Charge relay system is H75. A Phosphoserine modification is found at S93. D120 serves as the catalytic Charge relay system. The active-site Charge relay system is the S213.

This sequence belongs to the peptidase S1 family.

The protein localises to the secreted. Its subcellular location is the extracellular space. The enzyme catalyses Preferential cleavage: Tyr-|-Xaa, Trp-|-Xaa, Phe-|-Xaa, Leu-|-Xaa.. The protein is Chymotrypsinogen B (Ctrb1) of Rattus norvegicus (Rat).